The chain runs to 787 residues: MNSGLTPSPSPAVAAAGPAGVPGSKLKFCRYYAKDRTCFYGDECQFLHDDQLGGIHGNGNSPLSLPGGGPAAVYPQPVTPVGSKKLDLAGLEAQRLAIPGLDGGAIPDTSLTDSYFSTSFIGLNGFGSPGEATYPRMQQRMTNSSSSPSLLNDSAKPYAAHDPLGSPASAMFNDFGGLTMSQRRKTPNPTASEFIPKGGSTSRLSNMSQSSMSAFSQALFSHPSMGGPTGAGLAPGMSLSAGSSPLHSPKITPHTSPAPRRRSHTPNPANYMVPTSASTPVTNSVSQPPSTGEIIQKATVGGTTYFYTDTTPAPLTGMVFPNYHIYPPTAPHIAYMQPKANAPSFFMADELRQELINRHLITMAQIDQADMPGVPAEVDSYHSLFPLEPLPPPNRIKTSNFGYITSCYKAVNSKDDLPYCLRRIHGFRLVNTKCMSLVDTWKKIQHSNIVTLREMFTTKAFGEHSLVFAYDFHAGSETMMSRHFNDPSADAYFTKRKWGQHDGPLPRQHAGLLPESLIWAYIVQLSSALRTIHTAGLACRVMDPTKILITGKTRLRVNCVGIFDVLTYDGSQNNPVALMPQYQQADLISLGKVVLALACNSLAGIQRENLQKAMELVTINYSSDLKNLILYLLTEQNRMRSVNDIMPMIGARFYTQLDAAQMRNDVIEEDLAKEVQNGRLFRLLAKLGTINERPEFQKDPAWSETGDRYLLKLFRDHLFHQVTEAGTPWIDLSHIVSCLNKLDAGVPEKISLISRDEKSVLVVTYSDLKRCFENTFQELVAAANGQL.

A disordered region spans residues 1-20 (MNSGLTPSPSPAVAAAGPAG). The segment covering 11 to 20 (PAVAAAGPAG) has biased composition (low complexity). Residues 23–51 (GSKLKFCRYYAKDRTCFYGDECQFLHDDQ) form a C3H1-type zinc finger. Disordered stretches follow at residues 131 to 162 (EATY…AAHD), 179 to 210 (TMSQ…MSQS), and 226 to 291 (GGPT…PPST). Low complexity-rich tracts occupy residues 143 to 154 (NSSSSPSLLNDS) and 200 to 210 (STSRLSNMSQS). The PABPC-interacting motif-2 (PAM-2) signature appears at 185–200 (KTPNPTASEFIPKGGS). Positions 265–290 (TPNPANYMVPTSASTPVTNSVSQPPS) are enriched in polar residues. The tract at residues 365 to 650 (QIDQADMPGV…SVNDIMPMIG (286 aa)) is pseudokinase domain. ATP is bound by residues arginine 422, 471 to 478 (DFHAGSET), and 545 to 546 (TK). Positions 651 to 689 (ARFYTQLDAAQMRNDVIEEDLAKEVQNGRLFRLLAKLGT) form a coiled coil. Residues 690–787 (INERPEFQKD…ELVAAANGQL (98 aa)) form a knob domain region.

This sequence belongs to the protein kinase superfamily. PAN3 family. As to quaternary structure, homodimer. Forms a heterotrimer with a catalytic subunit pan2 to form the poly(A)-nuclease (PAN) deadenylation complex. Interacts (via PAM-2 motif) with poly(A)-binding protein pabpc1 (via PABC domain), conferring substrate specificity of the enzyme complex. Interacts with the GW182 family proteins tnrc6a, tnrc6b and tnrc6c.

The protein resides in the cytoplasm. Its subcellular location is the P-body. In terms of biological role, regulatory subunit of the poly(A)-nuclease (PAN) deadenylation complex, one of two cytoplasmic mRNA deadenylases involved in general and miRNA-mediated mRNA turnover. PAN specifically shortens poly(A) tails of RNA and the activity is stimulated by poly(A)-binding protein (PABP). PAN deadenylation is followed by rapid degradation of the shortened mRNA tails by the CCR4-NOT complex. Deadenylated mRNAs are then degraded by two alternative mechanisms, namely exosome-mediated 3'-5' exonucleolytic degradation, or deadenylation-dependent mRNA decaping and subsequent 5'-3' exonucleolytic degradation by XRN1. PAN3 acts as a positive regulator for PAN activity, recruiting the catalytic subunit PAN2 to mRNA via its interaction with RNA and PABP, and to miRNA targets via its interaction with GW182 family proteins. The sequence is that of PAN2-PAN3 deadenylation complex subunit pan3 from Xenopus tropicalis (Western clawed frog).